We begin with the raw amino-acid sequence, 2531 residues long: Neurogenic locus notch homolog protein 1 (2531 aa).

Positions 1 to 18 are cleaved as a signal peptide; that stretch reads MPRLLAPLLCLTLLPALA. The Extracellular portion of the chain corresponds to 19–1725; that stretch reads ARGLRCSQPS…VEPPLPSQLH (1707 aa). EGF-like domains lie at 20 to 58, 59 to 99, 102 to 139, and 140 to 176; these read RGLR…QRCQ, DPSP…PLCL, LANA…KSCQ, and QADP…PTCR. Cystine bridges form between cysteine 24/cysteine 37, cysteine 31/cysteine 46, cysteine 48/cysteine 57, cysteine 63/cysteine 74, cysteine 68/cysteine 87, cysteine 89/cysteine 98, cysteine 106/cysteine 117, cysteine 111/cysteine 127, cysteine 129/cysteine 138, cysteine 144/cysteine 155, cysteine 149/cysteine 164, cysteine 166/cysteine 175, cysteine 182/cysteine 195, cysteine 189/cysteine 204, cysteine 206/cysteine 215, cysteine 222/cysteine 233, cysteine 227/cysteine 243, cysteine 245/cysteine 254, cysteine 261/cysteine 272, cysteine 266/cysteine 281, cysteine 283/cysteine 292, cysteine 299/cysteine 312, cysteine 306/cysteine 321, cysteine 323/cysteine 332, cysteine 339/cysteine 350, cysteine 344/cysteine 359, cysteine 361/cysteine 370, cysteine 376/cysteine 387, cysteine 381/cysteine 398, cysteine 400/cysteine 409, cysteine 416/cysteine 429, cysteine 423/cysteine 438, and cysteine 440/cysteine 449. Residue asparagine 41 is glycosylated (N-linked (GlcNAc...) asparagine). An O-linked (Glc...) serine glycan is attached at serine 65. Residue threonine 73 is glycosylated (O-linked (Fuc...) threonine). O-linked (Fuc...) threonine glycosylation is present at threonine 116. The O-linked (Glc...) serine glycan is linked to serine 146. Positions 178–216 constitute an EGF-like 5; calcium-binding domain; the sequence is DVNECSQNPGLCRHGGTCHNEIGSYRCACRATHTGPHCE. A glycan (O-linked (Fuc...) threonine) is linked at threonine 194. Positions 218–255 constitute an EGF-like 6 domain; it reads PYVPCSPSPCQNGGTCRPTGDTTHECACLPGFAGQNCE. Threonine 232 is a glycosylation site (O-linked (Fuc...) threonine; alternate). Threonine 232 carries an O-linked (GalNAc...) threonine; alternate glycan. Positions 257–293 constitute an EGF-like 7; calcium-binding domain; the sequence is NVDDCPGNNCKNGGACVDGVNTYNCRCPPEWTGQYCT. The EGF-like 8; calcium-binding domain occupies 295–333; the sequence is DVDECQLMPNACQNGGTCHNSHGGYNCVCVNGWTGEDCS. An O-linked (Fuc...) threonine glycan is attached at threonine 311. The EGF-like 9; calcium-binding domain maps to 335-371; the sequence is NIDDCASAACFQGATCHDRVASFYCECPHGRTGLLCH. Serine 341 carries an O-linked (Glc...) serine glycan. A glycan (O-linked (Fuc...) threonine) is linked at threonine 349. The EGF-like 10 domain maps to 372 to 410; sequence LNDACISNPCNEGSNCDTNPVNGKAICTCPSGYTGPACS. Serine 378 carries an O-linked (Glc...) serine glycan. The EGF-like 11; calcium-binding domain maps to 412–450; the sequence is DVDECALGANPCEHAGKCLNTLGSFECQCLQGYTGPRCE. Positions 420–421 are interaction with DLL4; sequence AN. Residues threonine 432 and serine 435 each coordinate Ca(2+). The O-linked (Glc...) serine glycan is linked to serine 435. The segment at 448–452 is interaction with DLL4; that stretch reads RCEID. Ca(2+)-binding residues include aspartate 452, valine 453, and glutamate 455. Positions 452-488 constitute an EGF-like 12; calcium-binding domain; that stretch reads DVNECISNPCQNDATCLDQIGEFQCICMPGYEGVYCE. 3 disulfide bridges follow: cysteine 456-cysteine 467, cysteine 461-cysteine 476, and cysteine 478-cysteine 487. A glycan (O-linked (Glc...) serine) is linked at serine 458. Threonine 466 is a glycosylation site (O-linked (Fuc...) threonine). Residues aspartate 469 and glutamine 470 each coordinate Ca(2+). Residues asparagine 490, threonine 491, and glutamate 493 each contribute to the Ca(2+) site. The region spanning 490-526 is the EGF-like 13; calcium-binding domain; the sequence is NTDECASSPCLHNGRCVDKINEFLCQCPKGFSGHLCQ. 75 disulfide bridges follow: cysteine 494-cysteine 505, cysteine 499-cysteine 514, cysteine 516-cysteine 525, cysteine 532-cysteine 543, cysteine 537-cysteine 552, cysteine 554-cysteine 563, cysteine 570-cysteine 580, cysteine 575-cysteine 589, cysteine 591-cysteine 600, cysteine 607-cysteine 618, cysteine 612-cysteine 627, cysteine 629-cysteine 638, cysteine 645-cysteine 655, cysteine 650-cysteine 664, cysteine 666-cysteine 675, cysteine 682-cysteine 693, cysteine 687-cysteine 702, cysteine 704-cysteine 713, cysteine 720-cysteine 730, cysteine 725-cysteine 739, cysteine 741-cysteine 750, cysteine 757-cysteine 768, cysteine 762-cysteine 777, cysteine 779-cysteine 788, cysteine 795-cysteine 806, cysteine 800-cysteine 815, cysteine 817-cysteine 826, cysteine 833-cysteine 844, cysteine 838-cysteine 855, cysteine 857-cysteine 866, cysteine 873-cysteine 884, cysteine 878-cysteine 893, cysteine 895-cysteine 904, cysteine 911-cysteine 922, cysteine 916-cysteine 931, cysteine 933-cysteine 942, cysteine 949-cysteine 960, cysteine 954-cysteine 969, cysteine 971-cysteine 980, cysteine 987-cysteine 998, cysteine 992-cysteine 1007, cysteine 1009-cysteine 1018, cysteine 1025-cysteine 1036, cysteine 1030-cysteine 1045, cysteine 1047-cysteine 1056, cysteine 1063-cysteine 1074, cysteine 1068-cysteine 1083, cysteine 1085-cysteine 1094, cysteine 1101-cysteine 1122, cysteine 1116-cysteine 1131, cysteine 1133-cysteine 1142, cysteine 1149-cysteine 1160, cysteine 1154-cysteine 1169, cysteine 1171-cysteine 1180, cysteine 1187-cysteine 1198, cysteine 1192-cysteine 1207, cysteine 1209-cysteine 1218, cysteine 1225-cysteine 1244, cysteine 1238-cysteine 1253, cysteine 1255-cysteine 1264, cysteine 1271-cysteine 1284, cysteine 1276-cysteine 1293, cysteine 1295-cysteine 1304, cysteine 1311-cysteine 1322, cysteine 1316-cysteine 1334, cysteine 1336-cysteine 1345, cysteine 1352-cysteine 1363, cysteine 1357-cysteine 1372, cysteine 1374-cysteine 1383, cysteine 1391-cysteine 1403, cysteine 1397-cysteine 1414, cysteine 1416-cysteine 1425, cysteine 1449-cysteine 1472, cysteine 1454-cysteine 1467, and cysteine 1463-cysteine 1479. Serine 496 is a glycosylation site (O-linked (Glc...) serine). Positions 507 and 508 each coordinate Ca(2+). Residues 528-564 form the EGF-like 14; calcium-binding domain; sequence DVDECASTPCKNGAKCLDGPNTYTCVCTEGYTGTHCE. The O-linked (Glc...) serine glycan is linked to serine 534. The EGF-like 15; calcium-binding domain maps to 566 to 601; it reads DIDECDPDPCHYGLCKDGVATFTCLCQPGYTGHHCE. The region spanning 603-639 is the EGF-like 16; calcium-binding domain; sequence NINECHSQPCRHGGTCQDRDNYYLCLCLKGTTGPNCE. Serine 609 is a glycosylation site (O-linked (Glc...) serine). O-linked (Fuc...) threonine glycosylation is present at threonine 617. Residues 641-676 form the EGF-like 17; calcium-binding domain; sequence NLDDCASNPCDSGTCLDKIDGYECACEPGYTGSMCN. Serine 647 carries O-linked (Glc...) serine glycosylation. Positions 678-714 constitute an EGF-like 18; calcium-binding domain; it reads NIDECAGSPCHNGGTCEDGIAGFTCRCPEGYHDPTCL. Threonine 692 carries O-linked (Fuc...) threonine glycosylation. The EGF-like 19; calcium-binding domain occupies 716–751; the sequence is EVNECNSNPCIHGACRDGLNGYKCDCAPGWSGTNCD. Residue serine 722 is glycosylated (O-linked (Glc...) serine). Positions 753–789 constitute an EGF-like 20; calcium-binding domain; that stretch reads NNNECESNPCVNGGTCKDMTSGYVCTCREGFSGPNCQ. Serine 759 carries an O-linked (Glc...) serine glycan. Residue threonine 767 is glycosylated (O-linked (Fuc...) threonine). Serine 784 is a glycosylation site (O-linked (GlcNAc) serine). The 37-residue stretch at 791 to 827 folds into the EGF-like 21; calcium-binding domain; the sequence is NINECASNPCLNQGTCIDDVAGYKCNCPLPYTGATCE. An O-linked (Glc...) serine glycan is attached at serine 797. Threonine 805 carries an O-linked (Fuc...) threonine glycan. In terms of domain architecture, EGF-like 22 spans 829 to 867; sequence VLAPCATSPCKNSGVCKESEDYESFSCVCPTGWQGQTCE. The EGF-like 23; calcium-binding domain occupies 869–905; it reads DINECVKSPCRHGASCQNTNGSYRCLCQAGYTGRNCE. Asparagine 888 carries N-linked (GlcNAc...) asparagine glycosylation. A glycan (O-linked (GlcNAc) threonine) is linked at threonine 900. One can recognise an EGF-like 24 domain in the interval 907-943; the sequence is DIDDCRPNPCHNGGSCTDGVNAAFCDCLPGFQGAFCE. An O-linked (Fuc) serine glycan is attached at serine 921. The EGF-like 25; calcium-binding domain maps to 945–981; sequence DINECASNPCQNGANCTDCVDSYTCTCPTGFNGIHCE. Serine 951 carries O-linked (Glc...) serine glycosylation. Asparagine 959 carries N-linked (GlcNAc...) asparagine glycosylation. Positions 983 to 1019 constitute an EGF-like 26 domain; that stretch reads NTPDCTESSCFNGGTCVDGINSFTCLCPPGFTGSYCQ. Residue threonine 997 is glycosylated (O-linked (Fuc...) threonine). One can recognise an EGF-like 27; calcium-binding domain in the interval 1021 to 1057; the sequence is DVNECDSRPCLHGGTCQDSYGTYKCTCPQGYTGLNCQ. A glycan (O-linked (Glc...) serine) is linked at serine 1027. A glycan (O-linked (Fuc...) threonine) is linked at threonine 1035. EGF-like domains lie at 1059–1095 and 1097–1143; these read LVRW…FNCD and LSVS…SYCE. O-linked (Glc...) serine glycosylation is present at serine 1065. Positions 1145 to 1181 constitute an EGF-like 30; calcium-binding domain; sequence EVDECSPNPCQNGATCTDYLGGFSCKCVAGYHGSNCS. O-linked (Fuc...) threonine glycosylation occurs at threonine 1159. Residue asparagine 1179 is glycosylated (N-linked (GlcNAc...) asparagine). Residues 1183-1219 enclose the EGF-like 31; calcium-binding domain; it reads EINECLSQPCQNGGTCIDLTNTYKCSCPRGTQGVHCE. An O-linked (Glc...) serine glycan is attached at serine 1189. The O-linked (Fuc...) threonine glycan is linked to threonine 1197. Residues 1221–1265 form the EGF-like 32; calcium-binding domain; it reads NVDDCHPPLDPASRSPKCFNNGTCVDQVGGYTCTCPPGFVGERCE. N-linked (GlcNAc...) asparagine glycosylation occurs at asparagine 1241. 4 consecutive EGF-like domains span residues 1267 to 1305, 1307 to 1346, 1348 to 1384, and 1387 to 1426; these read DVNE…RRCE, VING…ATCE, DART…PECQ, and ASSP…LLCH. Serine 1273 carries O-linked (Glc...) serine glycosylation. O-linked (Fuc...) threonine glycosylation occurs at threonine 1362. The O-linked (GlcNAc...) threonine glycan is linked to threonine 1379. An O-linked (Fuc...) threonine; alternate glycan is attached at threonine 1402. O-linked (GalNAc...) threonine; alternate glycosylation occurs at threonine 1402. LNR repeat units lie at residues 1449 to 1489, 1490 to 1531, and 1532 to 1571; these read CELP…PWKN, CTQS…CNPL, and YDQY…RLAA. Aspartate 1457, asparagine 1460, aspartate 1475, and aspartate 1478 together coordinate Ca(2+). N-linked (GlcNAc...) asparagine glycosylation occurs at asparagine 1489. Intrachain disulfides connect cysteine 1490–cysteine 1514, cysteine 1496–cysteine 1509, cysteine 1505–cysteine 1521, cysteine 1536–cysteine 1549, and cysteine 1545–cysteine 1561. N-linked (GlcNAc...) asparagine glycosylation is present at asparagine 1587. Threonine 1715 carries O-linked (GalNAc...) threonine glycosylation. Residues 1718 to 1750 form an interaction with PSEN1 region; the sequence is PPLPSQLHLMYVAAAAFVLLFFVGCGVLLSRKR. The chain crosses the membrane as a helical span at residues 1726–1746; the sequence is LMYVAAAAFVLLFFVGCGVLL. Residues 1747–2531 lie on the Cytoplasmic side of the membrane; that stretch reads SRKRRRQHGQ…QITHIPEAFK (785 aa). A Glycyl lysine isopeptide (Lys-Gly) (interchain with G-Cter in ubiquitin) cross-link involves residue lysine 1749. Residues 1770–1798 are disordered; that stretch reads KKKRREPLGEDSVGLKPLKNASDGALMDD. At threonine 1851 the chain carries Phosphothreonine. ANK repeat units lie at residues 1917-1946, 1950-1980, 1984-2013, 2017-2046, and 2050-2079; these read TGET…DANI, MGRT…DLDA, DGTT…DVNA, LGKS…NKDM, and KEET…NRDI. Positions 1937–1945 are HIF1AN-binding; that stretch reads LLEASADAN. Asparagine 1945 bears the (3S)-3-hydroxyasparagine; by HIF1AN mark. The segment at 2004–2012 is HIF1AN-binding; that stretch reads LINSHADVN. The residue at position 2012 (asparagine 2012) is a (3S)-3-hydroxyasparagine; by HIF1AN. Disordered regions lie at residues 2141–2185, 2382–2428, and 2440–2531; these read SATQ…DSSS, QPQN…SLPV, and PTSL…EAFK. A compositionally biased stretch (low complexity) spans 2382 to 2395; sequence QPQNLQPPSQPHLS. Residues 2440-2478 show a composition bias toward polar residues; it reads PTSLPSSMVPPMTTTQFLTPPSQHSYSSSPVDNTPSHQL. The segment covering 2488 to 2503 has biased composition (low complexity); it reads PSPESPDQWSSSSPHS. Positions 2504–2524 are enriched in polar residues; the sequence is NISDWSEGISSPPTSMPSQIT.

Belongs to the NOTCH family. In terms of assembly, heterodimer of a C-terminal fragment N(TM) and an N-terminal fragment N(EC) which are probably linked by disulfide bonds. Interacts with DNER, DTX1, DTX2 and RBPJ/RBPSUH. Also interacts with MAML1, MAML2 and MAML3 which act as transcriptional coactivators for NOTCH1. Notch 1 intracellular domain interacts with SNW1; the interaction involves multimerized NOTCH1 NICD and is implicated in a formation of an intermediate preactivation complex which associates with DNA-bound CBF-1/RBPJ. The activated membrane-bound form interacts with AAK1 which promotes NOTCH1 stabilization. Forms a trimeric complex with FBXW7 and SGK1. Interacts with HIF1AN. HIF1AN negatively regulates the function of notch intracellular domain (NICD), accelerating myogenic differentiation. Interacts (via NICD) with SNAI1 (via zinc fingers); the interaction induces SNAI1 degradation via MDM2-mediated ubiquitination and inhibits SNAI1-induced cell invasion. Interacts (via NICD) with MDM2A. Interacts (via NICD) with BCL6; the interaction decreases MAML1 recruitment by NOTCH1 NICD on target genes DNA and inhibits NOTCH1 transactivation activity. Interacts with THBS4. Interacts (via the EGF-like repeat region) with CCN3 (via CTCK domain). Interacts (via EGF-like domains) with DLL4 (via N-terminal DSL and MNNL domains). Interacts with ZMIZ1. Interacts (via NICD domain) with MEGF10 (via the cytoplasmic domain). Interacts with DLL1 and JAG1. Interacts (via NICD domain) with PRAG1. Forms a complex with PRAG1, N1ICD and MAML1, in a MAML1-dependent manner. Interacts (via transmembrane region) with PSEN1; the interaction is direct. Interacts with ZFP64. Post-translationally, synthesized in the endoplasmic reticulum as an inactive form which is proteolytically cleaved by a furin-like convertase in the trans-Golgi network before it reaches the plasma membrane to yield an active, ligand-accessible form. Cleavage results in a C-terminal fragment N(TM) and a N-terminal fragment N(EC). Following ligand binding, it is cleaved by ADAM17 to yield a membrane-associated intermediate fragment called notch extracellular truncation (NEXT). Following endocytosis, this fragment is then cleaved by one of the catalytic subunits of gamma-secretase (PSEN1 or PSEN2) to release a Notch-derived peptide containing the intracellular domain (NICD) from the membrane. Phosphorylated. In terms of processing, O-glycosylated on the EGF-like domains. O-glucosylated at Ser-435 by KDELC1 and KDELC2. Contains both O-linked fucose and O-linked glucose in the EGF-like domains 11, 12 and 13, which are interacting with the residues on DLL4. O-linked glycosylation by GALNT11 is involved in determination of left/right symmetry: glycosylation promotes activation of NOTCH1, possibly by promoting cleavage by ADAM17, modulating the balance between motile and immotile (sensory) cilia at the left-right organiser (LRO). MFNG-, RFNG- and LFNG-mediated modification of O-fucose residues at specific EGF-like domains results in inhibition of its activation by JAG1 and enhancement of its activation by DLL1 via an increased binding to DLL1. Post-translationally, ubiquitinated. Undergoes 'Lys-29'-linked polyubiquitination by ITCH; promotes the lysosomal degradation of non-activated internalized NOTCH1. Deubiquitination by USP12 is required for transport of internalized non-activated receptor from late endosomes to lysosomes for degradation. Monoubiquitination at Lys-1749 is required for activation by gamma-secretase cleavage, it promotes interaction with AAK1, which stabilizes it. Deubiquitination by EIF3F is necessary for nuclear import of activated Notch. Hydroxylated at Asn-1945 and Asn-2012 by HIF1AN. Hydroxylation reduces affinity for HI1AN and may thus indirectly modulate negative regulation of NICD. Expressed in the brain, kidney and spleen. Expressed in postnatal central nervous system (CNS) germinal zones and, in early postnatal life, within numerous cells throughout the CNS. Found in both subventricular and ventricular germinal zones.

It is found in the cell membrane. The protein resides in the late endosome membrane. It localises to the nucleus. In terms of biological role, functions as a receptor for membrane-bound ligands Jagged-1 (JAG1), Jagged-2 (JAG2) and Delta-1 (DLL1) to regulate cell-fate determination. Upon ligand activation through the released notch intracellular domain (NICD) it forms a transcriptional activator complex with RBPJ/RBPSUH and activates genes of the enhancer of split locus. Affects the implementation of differentiation, proliferation and apoptotic programs. Involved in angiogenesis; negatively regulates endothelial cell proliferation and migration and angiogenic sprouting. Involved in the maturation of both CD4(+) and CD8(+) cells in the thymus. Important for follicular differentiation and possibly cell fate selection within the follicle. During cerebellar development, functions as a receptor for neuronal DNER and is involved in the differentiation of Bergmann glia. Represses neuronal and myogenic differentiation. May play an essential role in postimplantation development, probably in some aspect of cell specification and/or differentiation. May be involved in mesoderm development, somite formation and neurogenesis. May enhance HIF1A function by sequestering HIF1AN away from HIF1A. Required for the THBS4 function in regulating protective astrogenesis from the subventricular zone (SVZ) niche after injury. Involved in determination of left/right symmetry by modulating the balance between motile and immotile (sensory) cilia at the left-right organiser (LRO). The chain is Neurogenic locus notch homolog protein 1 (Notch1) from Rattus norvegicus (Rat).